The sequence spans 224 residues: Lipoprotein-releasing system ATP-binding protein LolD (224 aa).

Positions 5–224 (LEILDVSKCY…SLSGGMLTEL (220 aa)) constitute an ABC transporter domain. 40–47 (GSSGSGKS) contributes to the ATP binding site.

This sequence belongs to the ABC transporter superfamily. Lipoprotein translocase (TC 3.A.1.125) family. In terms of assembly, the complex is composed of two ATP-binding proteins (LolD) and two transmembrane proteins (LolC and LolE).

It localises to the cell inner membrane. Its function is as follows. Part of the ABC transporter complex LolCDE involved in the translocation of mature outer membrane-directed lipoproteins, from the inner membrane to the periplasmic chaperone, LolA. Responsible for the formation of the LolA-lipoprotein complex in an ATP-dependent manner. The protein is Lipoprotein-releasing system ATP-binding protein LolD of Anaplasma marginale (strain St. Maries).